Consider the following 160-residue polypeptide: Anaerobic nitrite reductase HBII (160 aa).

Residues 8-157 (GFTEEQEALV…LVAAIKLEMK (150 aa)) form the Globin domain. The short motif at 41 to 45 (EIAPS) is the Homodimerization element. Residues Ser-51, Lys-65, His-69, Lys-99, Ser-103, and His-104 each coordinate heme b. Positions 111–123 (DEHFEVTKFALLE) match the Homodimerization motif.

This sequence belongs to the plant globin family. As to quaternary structure, homodimer. Heme b is required as a cofactor.

The protein localises to the cytoplasm. Its subcellular location is the nucleus. The catalysed reaction is Fe(III)-heme b-[protein] + nitric oxide + H2O = Fe(II)-heme b-[protein] + nitrite + 2 H(+). Functionally, phytoglobin that reduces nitrite to nitric oxide (NO) under anoxic conditions (e.g. during flooding or in waterlogged soil) and upon root nodulation. Required for general plant development and during nodulation, especially for the onset of symbiosis. Monitors nitric oxide (NO) levels during early phase of the nitrogen-fixing symbiosis and buffers oxygen in functioning nodules. May not function as an oxygen storage or transport protein. Has an unusually high affinity for O(2) through a hexacoordinate heme iron because of a very low dissociation constant. The protein is Anaerobic nitrite reductase HBII of Casuarina glauca (Swamp oak).